The chain runs to 380 residues: Carbonic anhydrase 2 (380 aa).

Positions 1-20 (MARTGALLLAALALAGCAQA) are cleaved as a signal peptide. One can recognise an Alpha-carbonic anhydrase domain in the interval 38–322 (DHWDHSLNGE…HHHRRLLHNH (285 aa)). Cystine bridges form between cysteine 61–cysteine 264, cysteine 194–cysteine 198, and cysteine 296–cysteine 354. A glycan (N-linked (GlcNAc...) asparagine) is linked at asparagine 101. Residue histidine 112 is the Proton acceptor of the active site. N-linked (GlcNAc...) asparagine glycosylation occurs at asparagine 135. Zn(2+) contacts are provided by histidine 163, histidine 165, and histidine 182. 260–261 (TT) contacts substrate. N-linked (GlcNAc...) asparagine glycosylation occurs at asparagine 297.

It belongs to the alpha-carbonic anhydrase family. In terms of assembly, tetramer of two large and two small subunits linked by two disulfide bonds. Zn(2+) serves as cofactor.

It localises to the periplasm. It catalyses the reaction hydrogencarbonate + H(+) = CO2 + H2O. Functionally, reversible hydration of carbon dioxide. This chain is Carbonic anhydrase 2 (CAH2), found in Chlamydomonas reinhardtii (Chlamydomonas smithii).